The primary structure comprises 525 residues: GMP synthase [glutamine-hydrolyzing] (525 aa).

A Glutamine amidotransferase type-1 domain is found at 8-207 (KILILDFGSQ…ALDICGCAAN (200 aa)). The active-site Nucleophile is the Cys85. Catalysis depends on residues His181 and Glu183. A GMPS ATP-PPase domain is found at 208-400 (WKPSSIIEDA…LGLPYNMLYR (193 aa)). 235 to 241 (SGGVDSS) provides a ligand contact to ATP.

Homodimer.

The catalysed reaction is XMP + L-glutamine + ATP + H2O = GMP + L-glutamate + AMP + diphosphate + 2 H(+). It participates in purine metabolism; GMP biosynthesis; GMP from XMP (L-Gln route): step 1/1. Its function is as follows. Catalyzes the synthesis of GMP from XMP. This chain is GMP synthase [glutamine-hydrolyzing], found in Shewanella sp. (strain ANA-3).